Here is a 1038-residue protein sequence, read N- to C-terminus: Inner tegument protein (1038 aa).

An interaction with large tegument protein region spans residues 545–1038 (WGITPPVDVG…VPGNTSGSDP (494 aa)).

This sequence belongs to the herpesviridae inner tegument protein family. In terms of assembly, interacts (via C-terminus) with the large tegument protein/LTP (via N-terminus).

The protein localises to the virion tegument. The protein resides in the host cytoplasm. It localises to the host nucleus. It is found in the host Golgi apparatus. Its subcellular location is the host trans-Golgi network. In terms of biological role, plays an essential role in cytoplasmic secondary envelopment during viral egress. Interacts with the capsid via the large tegument protein/LTP and participates in its transport to the host trans-Golgi network (TGN) where secondary envelopment occurs. Modulates tegumentation and capsid accumulation at the viral assembly complex. In Homo sapiens (Human), this protein is Inner tegument protein (21).